A 173-amino-acid polypeptide reads, in one-letter code: Putative pre-16S rRNA nuclease (173 aa).

Belongs to the YqgF nuclease family.

It is found in the cytoplasm. In terms of biological role, could be a nuclease involved in processing of the 5'-end of pre-16S rRNA. The chain is Putative pre-16S rRNA nuclease from Psychrobacter cryohalolentis (strain ATCC BAA-1226 / DSM 17306 / VKM B-2378 / K5).